The following is a 429-amino-acid chain: Serine--tRNA ligase (429 aa).

235 to 237 contributes to the L-serine binding site; the sequence is TAE. Residue 266–268 participates in ATP binding; it reads RSE. Glu289 lines the L-serine pocket. 353-356 provides a ligand contact to ATP; it reads EISS. Residue Ser389 coordinates L-serine.

This sequence belongs to the class-II aminoacyl-tRNA synthetase family. Type-1 seryl-tRNA synthetase subfamily. In terms of assembly, homodimer. The tRNA molecule binds across the dimer.

It localises to the cytoplasm. The catalysed reaction is tRNA(Ser) + L-serine + ATP = L-seryl-tRNA(Ser) + AMP + diphosphate + H(+). It carries out the reaction tRNA(Sec) + L-serine + ATP = L-seryl-tRNA(Sec) + AMP + diphosphate + H(+). It functions in the pathway aminoacyl-tRNA biosynthesis; selenocysteinyl-tRNA(Sec) biosynthesis; L-seryl-tRNA(Sec) from L-serine and tRNA(Sec): step 1/1. Its function is as follows. Catalyzes the attachment of serine to tRNA(Ser). Is also able to aminoacylate tRNA(Sec) with serine, to form the misacylated tRNA L-seryl-tRNA(Sec), which will be further converted into selenocysteinyl-tRNA(Sec). The protein is Serine--tRNA ligase of Haemophilus influenzae (strain PittEE).